The primary structure comprises 349 residues: Thiamine thiazole synthase, chloroplastic (349 aa).

The transit peptide at 1-45 (MAAIASTLSLSSTKPQRLFDSSFHGSAISAAPISIGLKPRSFSVR) directs the protein to the chloroplast. Residues A94, 114-115 (EQ), G122, and A187 each bind substrate. C216 is modified (2,3-didehydroalanine (Cys)). Residues D218, H233, M285, and 295-297 (RMG) each bind substrate.

The protein belongs to the THI4 family. Homooctamer. Interacts with RBCX1 and RBCX1. Interacts with CPK33. Requires Fe cation as cofactor. During the catalytic reaction, a sulfide is transferred from Cys-216 to a reaction intermediate, generating a dehydroalanine residue. Not phosphorylated in vitro by CPK33. In terms of tissue distribution, expressed at high levels in chloroplast-containing parenchymatic cells of leaves, inflorescence shoots and flowers, and at lower levels in the vascular system. In young plants, detected in roots and shoots including cotyledons, leaves and hypocotyls. Also observed in apical meristematic regions, siliques and embryos. Low expression in roots, limited to the vascular tissue. Broadly expressed in roots, cotyledons, leaves, hypocotyls, inflorescences, siliques, and strongly in guard cells.

The protein localises to the plastid. It is found in the chloroplast. The protein resides in the mitochondrion. It localises to the cell membrane. It carries out the reaction [ADP-thiazole synthase]-L-cysteine + glycine + NAD(+) = [ADP-thiazole synthase]-dehydroalanine + ADP-5-ethyl-4-methylthiazole-2-carboxylate + nicotinamide + 3 H2O + 2 H(+). Its function is as follows. Involved in biosynthesis of the thiamine precursor thiazole. Catalyzes the conversion of NAD and glycine to adenosine diphosphate 5-(2-hydroxyethyl)-4-methylthiazole-2-carboxylic acid (ADT), an adenylated thiazole intermediate. The reaction includes an iron-dependent sulfide transfer from a conserved cysteine residue of the protein to a thiazole intermediate. The enzyme can only undergo a single turnover, which suggests it is a suicide enzyme. May have additional roles in adaptation to various stress conditions and in DNA damage tolerance. Acts as a positive regulator for the abscisic acid-induced activation of slow type anion channels during stomatal closure by repressing CPK33 kinase activity. The protein is Thiamine thiazole synthase, chloroplastic of Arabidopsis thaliana (Mouse-ear cress).